The primary structure comprises 220 residues: Deoxyribose-phosphate aldolase (220 aa).

The active-site Proton donor/acceptor is the D89. K151 functions as the Schiff-base intermediate with acetaldehyde in the catalytic mechanism. The Proton donor/acceptor role is filled by K180.

The protein belongs to the DeoC/FbaB aldolase family. DeoC type 1 subfamily.

The protein localises to the cytoplasm. The catalysed reaction is 2-deoxy-D-ribose 5-phosphate = D-glyceraldehyde 3-phosphate + acetaldehyde. It participates in carbohydrate degradation; 2-deoxy-D-ribose 1-phosphate degradation; D-glyceraldehyde 3-phosphate and acetaldehyde from 2-deoxy-alpha-D-ribose 1-phosphate: step 2/2. Its function is as follows. Catalyzes a reversible aldol reaction between acetaldehyde and D-glyceraldehyde 3-phosphate to generate 2-deoxy-D-ribose 5-phosphate. This is Deoxyribose-phosphate aldolase from Streptococcus gordonii (strain Challis / ATCC 35105 / BCRC 15272 / CH1 / DL1 / V288).